A 633-amino-acid chain; its full sequence is Carbon catabolite-derepressing protein kinase (633 aa).

Residues 1 to 16 (MSSNNNTNTAPANANS) are compositionally biased toward low complexity. Residues 1-46 (MSSNNNTNTAPANANSSHHHHHHHHHHHHHGHGGSNSTLNNPKSSL) form a disordered region. Basic residues predominate over residues 17-32 (SHHHHHHHHHHHHHGH). The 252-residue stretch at 55–306 (YQIVKTLGEG…IHEIMQDDWF (252 aa)) folds into the Protein kinase domain. Residues 61–69 (LGEGSFGKV) and K84 each bind ATP. The active-site Proton acceptor is the D177. T210 carries the post-translational modification Phosphothreonine; by autocatalysis. The auto-inhibitory domain (AID) stretch occupies residues 313–392 (YLLPPDLKPH…YMLIKENKSL (80 aa)). The tract at residues 317 to 345 (PDLKPHPEEENENNDSKKDGSSPDNDEID) is disordered. The segment covering 319 to 337 (LKPHPEEENENNDSKKDGS) has biased composition (basic and acidic residues). Positions 348-389 (LVNILSSTMGYEKDEIYESLESSEDTPAFNEIRDAYMLIKEN) constitute a UBA domain. The segment at 409–434 (FLSQSPPTFQQQSKSHQKSQVDHETA) is disordered. A Phosphoserine modification is found at S413. A Glycyl lysine isopeptide (Lys-Gly) (interchain with G-Cter in ubiquitin) cross-link involves residue K461. At S487 the chain carries Phosphoserine. Residue K549 forms a Glycyl lysine isopeptide (Lys-Gly) (interchain with G-Cter in SUMO) linkage. S632 carries the phosphoserine modification.

Belongs to the protein kinase superfamily. CAMK Ser/Thr protein kinase family. SNF1 subfamily. Component of the AMP-activated protein kinase complex also known as the SNF1 kinase complex (Snf1c), a heterotrimeric complex composed of an alpha subunit (SNF1), a regulatory subunit beta (GAL83 and substoichiometric alternate beta subunits SIP1 and SIP2), and a regulatory subunit gamma (SNF4). Interacts with the transcriptional activator SIP4. Interacts with SAK1. Interacts with CTK1: Interacts with adenylate cyclase CYR1. In terms of processing, phosphorylation at Thr-210 in response to glucose limitation leads to activation of kinase activity. ADP, but not AMP, protects the enzyme from dephosphorylation at Thr-210 by GLC7. Sumoylation by the SUMO (E3) ligase MMS21 leads to inhibition by interaction of SUMO attached to Lys-549 with a SUMO-interacting sequence motif located near the active site of SNF1, and by targeting SNF1 for glucose-induced destruction via the SLX5-SLX8 (SUMO-directed) ubiquitin ligase.

The protein resides in the cytoplasm. It localises to the nucleus. The protein localises to the nucleus membrane. It catalyses the reaction L-seryl-[protein] + ATP = O-phospho-L-seryl-[protein] + ADP + H(+). The enzyme catalyses L-threonyl-[protein] + ATP = O-phospho-L-threonyl-[protein] + ADP + H(+). With respect to regulation, the kinase activity is positively regulated by SNF4 via sequestration of the SNF1 auto-inhibitory domain (AID). Functionally, serine/threonine protein kinase essential for release from glucose repression. Catalytic subunit of the AMP-activated protein kinase complex also known as the SNF1 kinase complex (Snf1c), a central regulator of cellular energy homeostasis, which, in response to a fall in intracellular ATP levels, activates energy-producing pathways and inhibits energy-consuming processes. The complex phosphorylates histone H3 to form H3S10ph, which promotes H3K14ac formation, leading to transcriptional activation through TBP recruitment to the promoters. The complex also negatively regulates the HOG1 MAPK pathway in ER stress response including unfolded protein response (UPR). Under nutrient/energy depletion, the complex phosphorylates and activates PAS kinase PSK1 which in turn activates PBS1, leading to the inhibition of the TORC1 signaling pathway. SNF1 also interacts and phosphorylates adenylate cyclase CYR1 and negatively regulates the protein kinase A signaling pathway. Also phosphorylates and regulates the transcriptional activator CAT8. This chain is Carbon catabolite-derepressing protein kinase, found in Saccharomyces cerevisiae (strain ATCC 204508 / S288c) (Baker's yeast).